Reading from the N-terminus, the 391-residue chain is Nucleosome assembly protein 1-like 1 (391 aa).

The segment covering 1–10 (MADIDNKEQS) has biased composition (basic and acidic residues). A disordered region spans residues 1–32 (MADIDNKEQSELDQDLEDVEEVEEEETGEETK). An N-acetylalanine modification is found at alanine 2. At serine 10 the chain carries Phosphoserine. Over residues 11–28 (ELDQDLEDVEEVEEEETG) the composition is skewed to acidic residues. Residues threonine 62 and threonine 64 each carry the phosphothreonine modification. Residue serine 69 is modified to Phosphoserine. At lysine 116 the chain carries N6-acetyllysine. Residues 125–150 (YEPTEEECEWKPDEEDEVSEELKEKA) carry the NAP1L motif motif. The span at 131-143 (ECEWKPDEEDEVS) shows a compositional bias: acidic residues. A disordered region spans residues 131-163 (ECEWKPDEEDEVSEELKEKAKIEDEKKDEEKED). Serine 143 is subject to Phosphoserine. The span at 144 to 163 (EELKEKAKIEDEKKDEEKED) shows a compositional bias: basic and acidic residues. The short motif at 273 to 279 (IKKKQKH) is the Nuclear localization signal element. The span at 346–376 (AIEDDDDDYDEEGEEADEEGEEEGDEENDPD) shows a compositional bias: acidic residues. The interval 346–391 (AIEDDDDDYDEEGEEADEEGEEEGDEENDPDYDPKKDQNPAECKQQ) is disordered. A 5-glutamyl polyglycine mark is found at glutamate 359 and glutamate 360. Positions 377–391 (YDPKKDQNPAECKQQ) are enriched in basic and acidic residues. Cysteine 388 carries the post-translational modification Cysteine methyl ester. A lipid anchor (S-farnesyl cysteine) is attached at cysteine 388. Residues 389 to 391 (KQQ) constitute a propeptide, removed in mature form.

It belongs to the nucleosome assembly protein (NAP) family. As to quaternary structure, homodimer. The dimer binds strongly and sequentially to single and double H2A-H2B heterodimers. Interacts with ERCC6; this interaction increases ERCC6 processivity. Interacts with RAD54. Interacts with SETD1A. Polyglycylated by TTLL10 on glutamate residues, resulting in polyglycine chains on the gamma-carboxyl group. Both polyglutamylation and polyglycylation modifications can coexist on the same protein on adjacent residues, and lowering polyglycylation levels increases polyglutamylation, and reciprocally. In terms of processing, polyglutamylated by TTLL4 on glutamate residues, resulting in polyglutamate chains on the gamma-carboxyl group. Both polyglutamylation and polyglycylation modifications can coexist on the same protein on adjacent residues, and lowering polyglycylation levels increases polyglutamylation, and reciprocally. Highly expressed in the brain (at protein level). High expression in cerebral cortex, not in cerebellar cortex.

Its subcellular location is the nucleus. The protein resides in the cytoplasm. It is found in the melanosome. Functionally, histone chaperone that plays a role in the nuclear import of H2A-H2B and nucleosome assembly. Also participates in several important DNA repair mechanisms: greatly enhances ERCC6-mediated chromatin remodeling which is essential for transcription-coupled nucleotide excision DNA repair. Also stimulates homologous recombination (HR) by RAD51 and RAD54 which is essential in mitotic DNA double strand break (DSB) repair. Plays a key role in the regulation of embryonic neurogenesis. Promotes the proliferation of neural progenitors and inhibits neuronal differentiation during cortical development. Regulates neurogenesis via the modulation of RASSF10; regulates RASSF10 expression by promoting SETD1A-mediated H3K4 methylation at the RASSF10 promoter. This Mus musculus (Mouse) protein is Nucleosome assembly protein 1-like 1 (Nap1l1).